The sequence spans 242 residues: Urease accessory protein UreF (242 aa).

This sequence belongs to the UreF family. As to quaternary structure, ureD, UreF and UreG form a complex that acts as a GTP-hydrolysis-dependent molecular chaperone, activating the urease apoprotein by helping to assemble the nickel containing metallocenter of UreC. The UreE protein probably delivers the nickel.

Its subcellular location is the cytoplasm. Required for maturation of urease via the functional incorporation of the urease nickel metallocenter. This Bradyrhizobium diazoefficiens (strain JCM 10833 / BCRC 13528 / IAM 13628 / NBRC 14792 / USDA 110) protein is Urease accessory protein UreF.